A 232-amino-acid chain; its full sequence is Octanoyltransferase (232 aa).

A BPL/LPL catalytic domain is found at 44–219 (EHTGDELWVV…QLARQFGLVL (176 aa)). Substrate contacts are provided by residues 83 to 90 (RGGQVTYH), 150 to 152 (ALG), and 163 to 165 (GLS). The active-site Acyl-thioester intermediate is the cysteine 181.

It belongs to the LipB family.

It is found in the cytoplasm. The catalysed reaction is octanoyl-[ACP] + L-lysyl-[protein] = N(6)-octanoyl-L-lysyl-[protein] + holo-[ACP] + H(+). It participates in protein modification; protein lipoylation via endogenous pathway; protein N(6)-(lipoyl)lysine from octanoyl-[acyl-carrier-protein]: step 1/2. Functionally, catalyzes the transfer of endogenously produced octanoic acid from octanoyl-acyl-carrier-protein onto the lipoyl domains of lipoate-dependent enzymes. Lipoyl-ACP can also act as a substrate although octanoyl-ACP is likely to be the physiological substrate. In Xanthomonas campestris pv. campestris (strain 8004), this protein is Octanoyltransferase.